The sequence spans 907 residues: DNA ligase 4 (907 aa).

Positions 273, 275, 280, 333, 378, 438, 443, 460, and 462 each coordinate ATP. The active-site N6-AMP-lysine intermediate is the Lys275. Glu333 is a binding site for Mg(2+). Residue Glu438 participates in Mg(2+) binding. 2 consecutive BRCT domains span residues 655–754 and 800–906; these read PVSN…ESDI and VPLF…HYQC.

Belongs to the ATP-dependent DNA ligase family. The cofactor is Mg(2+).

The protein localises to the nucleus. The enzyme catalyses ATP + (deoxyribonucleotide)n-3'-hydroxyl + 5'-phospho-(deoxyribonucleotide)m = (deoxyribonucleotide)n+m + AMP + diphosphate.. Functionally, DNA ligase involved in DNA non-homologous end joining (NHEJ); required for double-strand break (DSB) repair. This chain is DNA ligase 4 (LIG4), found in Kluyveromyces lactis (strain ATCC 8585 / CBS 2359 / DSM 70799 / NBRC 1267 / NRRL Y-1140 / WM37) (Yeast).